We begin with the raw amino-acid sequence, 272 residues long: Orotidine 5'-phosphate decarboxylase (272 aa).

Lysine 96 functions as the Proton donor in the catalytic mechanism.

This sequence belongs to the OMP decarboxylase family. Type 2 subfamily.

It carries out the reaction orotidine 5'-phosphate + H(+) = UMP + CO2. The protein operates within pyrimidine metabolism; UMP biosynthesis via de novo pathway; UMP from orotate: step 2/2. The sequence is that of Orotidine 5'-phosphate decarboxylase from Christiangramia forsetii (strain DSM 17595 / CGMCC 1.15422 / KT0803) (Gramella forsetii).